The primary structure comprises 218 residues: MTAVIGVRELGLLDYLPAWQAMQRFTGQRGAQTPDELWLLEHPPVFTQGQAGKAEHLLFPGDIPVVQVDRGGQVTYHGPGQLVGYLLLDVRRSGMGVRELVSRIERSLIELLAGYDVEAHARPDAPGVYVGEMKIASLGLRIRNGRSFHGLALNVDMDLAPFQRINPCGYAGMLMTQLKDQARGPVEFAEVRSRLRAQLAAQLGYAEAKTLTGGIESI.

The region spanning 31–207 is the BPL/LPL catalytic domain; that stretch reads AQTPDELWLL…QLAAQLGYAE (177 aa). Substrate is bound by residues 70–77, 137–139, and 150–152; these read RGGQVTYH, SLG, and GLA. The active-site Acyl-thioester intermediate is cysteine 168.

It belongs to the LipB family.

Its subcellular location is the cytoplasm. The catalysed reaction is octanoyl-[ACP] + L-lysyl-[protein] = N(6)-octanoyl-L-lysyl-[protein] + holo-[ACP] + H(+). The protein operates within protein modification; protein lipoylation via endogenous pathway; protein N(6)-(lipoyl)lysine from octanoyl-[acyl-carrier-protein]: step 1/2. In terms of biological role, catalyzes the transfer of endogenously produced octanoic acid from octanoyl-acyl-carrier-protein onto the lipoyl domains of lipoate-dependent enzymes. Lipoyl-ACP can also act as a substrate although octanoyl-ACP is likely to be the physiological substrate. The chain is Octanoyltransferase from Azotobacter vinelandii (strain DJ / ATCC BAA-1303).